The following is a 262-amino-acid chain: Trypsin theta (262 aa).

An N-terminal signal peptide occupies residues 1-19 (MHRLVVLLVCLAVGSACAG). Residues 20 to 34 (TVGVSNGDPFEREGR) constitute a propeptide, activation peptide. The region spanning 35–260 (IVGGEDTTIG…LRKWILNASE (226 aa)) is the Peptidase S1 domain. Cysteine 61 and cysteine 77 are joined by a disulfide. Active-site charge relay system residues include histidine 76 and aspartate 121. Cystine bridges form between cysteine 186-cysteine 203 and cysteine 212-cysteine 236. Serine 216 serves as the catalytic Charge relay system.

The protein belongs to the peptidase S1 family.

The protein resides in the secreted. It is found in the extracellular space. It carries out the reaction Preferential cleavage: Arg-|-Xaa, Lys-|-Xaa.. In Drosophila melanogaster (Fruit fly), this protein is Trypsin theta (thetaTry).